Here is a 458-residue protein sequence, read N- to C-terminus: Elongation factor 1-alpha (458 aa).

Glycine 2 is modified (n,N,N-trimethylglycine). Lysine 3 carries the N6,N6-dimethyllysine; alternate modification. At lysine 3 the chain carries N6-methyllysine; alternate. The tr-type G domain occupies 5–240; the sequence is KTHVNVVVIG…DAIEPPVRPS (236 aa). A G1 region spans residues 14 to 21; the sequence is GHVDSGKS. A GTP-binding site is contributed by 14–21; sequence GHVDSGKS. Lysine 30 carries the N6-methyllysine modification. Residues 70–74 form a G2 region; it reads GITID. At lysine 79 the chain carries N6,N6,N6-trimethyllysine. The interval 91-94 is G3; sequence DAPG. GTP-binding positions include 91–95 and 153–156; these read DAPGH and NKMD. The segment at 153–156 is G4; sequence NKMD. A G5 region spans residues 192-194; that stretch reads SGW. An N6,N6-dimethyllysine; alternate modification is found at lysine 316. Lysine 316 is modified (N6-methyllysine; alternate). Lysine 390 is subject to N6-methyllysine.

The protein belongs to the TRAFAC class translation factor GTPase superfamily. Classic translation factor GTPase family. EF-Tu/EF-1A subfamily.

The protein localises to the cytoplasm. Functionally, this protein promotes the GTP-dependent binding of aminoacyl-tRNA to the A-site of ribosomes during protein biosynthesis. The polypeptide is Elongation factor 1-alpha (TEF-2) (Mucor circinelloides f. lusitanicus (Mucor racemosus var. lusitanicus)).